The chain runs to 252 residues: Adenosine 5'-phosphosulfate reductase (252 aa).

[4Fe-4S] cluster-binding residues include Cys-125, Cys-126, Cys-208, and Cys-211. Residues 219 to 252 (DGYSREGRWSDRDKTECGLHTSPEDEDGAHAAES) form a disordered region. Positions 221–235 (YSREGRWSDRDKTEC) are enriched in basic and acidic residues. Residue Cys-235 is the Nucleophile; cysteine thiosulfonate intermediate of the active site.

Belongs to the PAPS reductase family. CysH subfamily. Requires [4Fe-4S] cluster as cofactor.

The protein resides in the cytoplasm. The enzyme catalyses [thioredoxin]-disulfide + sulfite + AMP + 2 H(+) = adenosine 5'-phosphosulfate + [thioredoxin]-dithiol. Its pathway is sulfur metabolism; hydrogen sulfide biosynthesis; sulfite from sulfate. In terms of biological role, catalyzes the formation of sulfite from adenosine 5'-phosphosulfate (APS) using thioredoxin as an electron donor. This is Adenosine 5'-phosphosulfate reductase from Salinibacter ruber (strain DSM 13855 / M31).